The sequence spans 307 residues: 17-beta-hydroxysteroid dehydrogenase type 3 (307 aa).

A helical transmembrane segment spans residues Ile-6–Leu-26. An NADP(+)-binding site is contributed by Gly-47–Ile-76. Ser-187 lines the substrate pocket. Tyr-200 functions as the Proton acceptor in the catalytic mechanism.

It belongs to the short-chain dehydrogenases/reductases (SDR) family. As to expression, expression shows strong sexual dimorphism. In female, highly expressed in ovaries, and at lower levels in skin muscle, eyes and liver. In males, strongly expressed in liver and at lower levels in testis, spleen, kidney, intestine and muscle.

It is found in the endoplasmic reticulum. It localises to the membrane. The catalysed reaction is a 17beta-hydroxy steroid + NADP(+) = a 17-oxo steroid + NADPH + H(+). It catalyses the reaction testosterone + NADP(+) = androst-4-ene-3,17-dione + NADPH + H(+). It carries out the reaction 3beta-hydroxyandrost-5-en-17-one + NADPH + H(+) = androst-5-en-3beta,17beta-diol + NADP(+). The enzyme catalyses 3beta-hydroxy-5alpha-androstan-17-one + NADPH + H(+) = 5alpha-androstane-3beta,17beta-diol + NADP(+). The catalysed reaction is androst-4-ene-3,11,17-trione + NADPH + H(+) = 17beta-hydroxyandrost-4-ene-3,11-dione + NADP(+). It catalyses the reaction 11beta-hydroxyandrost-4-ene-3,17-dione + NADPH + H(+) = 11beta,17beta-dihydroxyandrost-4-ene-3-one + NADP(+). Its pathway is hormone biosynthesis; testosterone biosynthesis. It functions in the pathway steroid metabolism. Functionally, catalyzes the conversion of 17-oxosteroids to 17beta-hydroxysteroids in the presence of NADPH. Favors the reduction of androstenedione to testosterone. Testosterone is the key androgen driving male development and function. Among further tested androgens epiandrosterone and dehydroepiandrosterone are accepted as substrates and reduced at C-17. Can also reduce 11-ketoandrostenedione as well as 11beta-hydroxyandrostenedione at C-17 to the respective testosterone forms. Cannot use androsterone and androstanedione as substrates. The sequence is that of 17-beta-hydroxysteroid dehydrogenase type 3 (hsd17b3) from Danio rerio (Zebrafish).